Here is a 132-residue protein sequence, read N- to C-terminus: Small ribosomal subunit protein uS8 (132 aa).

This sequence belongs to the universal ribosomal protein uS8 family. Part of the 30S ribosomal subunit. Contacts proteins S5 and S12.

Functionally, one of the primary rRNA binding proteins, it binds directly to 16S rRNA central domain where it helps coordinate assembly of the platform of the 30S subunit. The sequence is that of Small ribosomal subunit protein uS8 from Baumannia cicadellinicola subsp. Homalodisca coagulata.